A 918-amino-acid chain; its full sequence is DNA ligase 1 (918 aa).

A compositionally biased stretch (polar residues) spans 1-15 (MQRSIMSFFQPTTTE). The interval 1 to 271 (MQRSIMSFFQ…DPTNYNPSKS (271 aa)) is disordered. The segment covering 16-54 (GKAKKPEKEIPSSIREKEPPPKVALKERNRAVPESDSPV) has biased composition (basic and acidic residues). Phosphoserine is present on residues Ser-50, Ser-52, Ser-66, and Ser-67. At Thr-78 the chain carries Phosphothreonine. Over residues 81-92 (VQKPVSDSKQSS) the composition is skewed to low complexity. Positions 100-114 (PENSPVFNCSPSMDI) are enriched in polar residues. Residues 120 to 130 (PKRRTARKQLP) show a composition bias toward basic residues. Lys-145 carries the N6-acetyllysine modification. Thr-195 is subject to Phosphothreonine. At Lys-227 the chain carries N6-acetyllysine. Phosphoserine occurs at positions 230 and 231. Position 234 is a phosphothreonine (Thr-234). The segment covering 240-259 (VKTEVKQEESDTPRKEETKG) has biased composition (basic and acidic residues). Glu-566 contributes to the ATP binding site. The N6-AMP-lysine intermediate role is filled by Lys-568. Positions 573 and 621 each coordinate ATP. Glu-621 is a Mg(2+) binding site. The interval 642–644 (KRK) is interaction with target DNA. Residue Glu-720 coordinates Mg(2+). Residues Lys-725 and Lys-744 each coordinate ATP. Thr-798 carries the post-translational modification Phosphothreonine. Ser-801, Ser-908, Ser-909, and Ser-913 each carry phosphoserine. Residues 881 to 918 (DKQPEQATTSDQVASLYRKQSQIQNQQSSDLDSDVEDY) are disordered. Polar residues predominate over residues 885–910 (EQATTSDQVASLYRKQSQIQNQQSSD).

It belongs to the ATP-dependent DNA ligase family. In terms of assembly, interacts with PCNA. Interacts with POLB. Mg(2+) serves as cofactor.

It is found in the nucleus. The enzyme catalyses ATP + (deoxyribonucleotide)n-3'-hydroxyl + 5'-phospho-(deoxyribonucleotide)m = (deoxyribonucleotide)n+m + AMP + diphosphate.. Functionally, DNA ligase that seals nicks in double-stranded during DNA repair. Also involved in DNA replication and DNA recombination. This Rattus norvegicus (Rat) protein is DNA ligase 1 (Lig1).